Reading from the N-terminus, the 503-residue chain is Probable cytosol aminopeptidase (503 aa).

Mn(2+) contacts are provided by Lys-270 and Asp-275. Lys-282 is an active-site residue. The Mn(2+) site is built by Asp-293, Asp-352, and Glu-354. Arg-356 is a catalytic residue.

The protein belongs to the peptidase M17 family. Requires Mn(2+) as cofactor.

It localises to the cytoplasm. It catalyses the reaction Release of an N-terminal amino acid, Xaa-|-Yaa-, in which Xaa is preferably Leu, but may be other amino acids including Pro although not Arg or Lys, and Yaa may be Pro. Amino acid amides and methyl esters are also readily hydrolyzed, but rates on arylamides are exceedingly low.. The catalysed reaction is Release of an N-terminal amino acid, preferentially leucine, but not glutamic or aspartic acids.. Presumably involved in the processing and regular turnover of intracellular proteins. Catalyzes the removal of unsubstituted N-terminal amino acids from various peptides. The polypeptide is Probable cytosol aminopeptidase (Yersinia enterocolitica serotype O:8 / biotype 1B (strain NCTC 13174 / 8081)).